Reading from the N-terminus, the 105-residue chain is Small ribosomal subunit protein uS17 (105 aa).

It belongs to the universal ribosomal protein uS17 family. In terms of assembly, part of the 30S ribosomal subunit.

One of the primary rRNA binding proteins, it binds specifically to the 5'-end of 16S ribosomal RNA. The sequence is that of Small ribosomal subunit protein uS17 from Thermus thermophilus (strain ATCC BAA-163 / DSM 7039 / HB27).